We begin with the raw amino-acid sequence, 248 residues long: MRFDVVTIFPEYLSVLDVSLLGRARREGLVDVHVHDLRDFTVDRHRTVDDTPYGGGAGMVMKPEPWALALEHVAAQGPAAPAPADPASAEPGDRPVLLVPTPSGERFTQRFARELAGREHVAIACGRYEGIDERVFGWAEELFEVRLVSLGDYVLNGGEVAALAMIEAVGRLVPGVVGNPASLVEESHEDGLLEYPVYTKPADWRGRAVPPVLLSGDHGKVAAWRRTQQEERTRERRPDLWAAFDSED.

Residues Gly126 and 150–155 each bind S-adenosyl-L-methionine; that span reads LGDYVL. Residues 224–248 are disordered; that stretch reads WRRTQQEERTRERRPDLWAAFDSED. Positions 227 to 239 are enriched in basic and acidic residues; it reads TQQEERTRERRPD.

Belongs to the RNA methyltransferase TrmD family. In terms of assembly, homodimer.

Its subcellular location is the cytoplasm. The catalysed reaction is guanosine(37) in tRNA + S-adenosyl-L-methionine = N(1)-methylguanosine(37) in tRNA + S-adenosyl-L-homocysteine + H(+). Specifically methylates guanosine-37 in various tRNAs. This Micrococcus luteus (strain ATCC 4698 / DSM 20030 / JCM 1464 / CCM 169 / CCUG 5858 / IAM 1056 / NBRC 3333 / NCIMB 9278 / NCTC 2665 / VKM Ac-2230) (Micrococcus lysodeikticus) protein is tRNA (guanine-N(1)-)-methyltransferase.